Consider the following 161-residue polypeptide: Putative 4-hydroxy-4-methyl-2-oxoglutarate aldolase (161 aa).

Substrate contacts are provided by residues Gly77 to Leu80 and Arg99. A divalent metal cation is bound at residue Asp100.

This sequence belongs to the class II aldolase/RraA-like family. Homotrimer. It depends on a divalent metal cation as a cofactor.

The catalysed reaction is 4-hydroxy-4-methyl-2-oxoglutarate = 2 pyruvate. It catalyses the reaction oxaloacetate + H(+) = pyruvate + CO2. Functionally, catalyzes the aldol cleavage of 4-hydroxy-4-methyl-2-oxoglutarate (HMG) into 2 molecules of pyruvate. Also contains a secondary oxaloacetate (OAA) decarboxylase activity due to the common pyruvate enolate transition state formed following C-C bond cleavage in the retro-aldol and decarboxylation reactions. The protein is Putative 4-hydroxy-4-methyl-2-oxoglutarate aldolase of Methylococcus capsulatus (strain ATCC 33009 / NCIMB 11132 / Bath).